We begin with the raw amino-acid sequence, 97 residues long: uncharacterized protein (97 aa).

Positions 1–21 are cleaved as a signal peptide; the sequence is MLLHGLGRMNIIFICFPSLAC.

This is an uncharacterized protein from Schizosaccharomyces pombe (strain 972 / ATCC 24843) (Fission yeast).